The chain runs to 115 residues: Putative HNH nuclease YajD (115 aa).

The HNH domain occupies 27-75; sequence CGRCSREFVYSNLRELTVHHIDHDHTNNPEDGSNWELLCLYCHDHEHSK.

It belongs to the HNH nuclease family.

The polypeptide is Putative HNH nuclease YajD (yajD) (Salmonella typhi).